The chain runs to 193 residues: FMN-dependent NADH:quinone oxidoreductase 1 (193 aa).

Residues Ser9, 15–17 (SIS), and 85–88 (MYNF) contribute to the FMN site.

The protein belongs to the azoreductase type 1 family. As to quaternary structure, homodimer. The cofactor is FMN.

The enzyme catalyses 2 a quinone + NADH + H(+) = 2 a 1,4-benzosemiquinone + NAD(+). It carries out the reaction N,N-dimethyl-1,4-phenylenediamine + anthranilate + 2 NAD(+) = 2-(4-dimethylaminophenyl)diazenylbenzoate + 2 NADH + 2 H(+). Functionally, quinone reductase that provides resistance to thiol-specific stress caused by electrophilic quinones. In terms of biological role, also exhibits azoreductase activity. Catalyzes the reductive cleavage of the azo bond in aromatic azo compounds to the corresponding amines. This Xanthomonas axonopodis pv. citri (strain 306) protein is FMN-dependent NADH:quinone oxidoreductase 1.